An 87-amino-acid polypeptide reads, in one-letter code: Small polypeptide DEVIL 11 (87 aa).

Positions Met-1–Gly-11 are enriched in polar residues. Residues Met-1–Gln-47 form a disordered region. Over residues His-14–Gly-27 the composition is skewed to basic and acidic residues. Residues Ser-29 to Ser-41 are compositionally biased toward low complexity. Residues Ala-51–Asp-82 are required for DVL/RTFL small polypeptide activity. The chain crosses the membrane as a helical span at residues Arg-64–Trp-80. A glycan (N-linked (GlcNAc...) asparagine) is linked at Asn-83.

Belongs to the DVL/RTFL small polypeptides family.

The protein localises to the cell membrane. Functionally, small polypeptide acting as a regulatory molecule which coordinates cellular responses required for differentiation, growth and development, probably by restricting polar cell proliferation in lateral organs and coordinating socket cell recruitment and differentiation at trichome sites. The chain is Small polypeptide DEVIL 11 from Arabidopsis thaliana (Mouse-ear cress).